Here is a 215-residue protein sequence, read N- to C-terminus: Histidine biosynthesis bifunctional protein HisIE (215 aa).

The interval 1–118 (MTKSISIEHL…YKNDVALLQI (118 aa)) is phosphoribosyl-AMP cyclohydrolase. The phosphoribosyl-ATP pyrophosphohydrolase stretch occupies residues 119–215 (IPQVSAKIKE…HVEKEGQQRE (97 aa)).

It in the N-terminal section; belongs to the PRA-CH family. In the C-terminal section; belongs to the PRA-PH family.

Its subcellular location is the cytoplasm. It catalyses the reaction 1-(5-phospho-beta-D-ribosyl)-ATP + H2O = 1-(5-phospho-beta-D-ribosyl)-5'-AMP + diphosphate + H(+). The catalysed reaction is 1-(5-phospho-beta-D-ribosyl)-5'-AMP + H2O = 1-(5-phospho-beta-D-ribosyl)-5-[(5-phospho-beta-D-ribosylamino)methylideneamino]imidazole-4-carboxamide. Its pathway is amino-acid biosynthesis; L-histidine biosynthesis; L-histidine from 5-phospho-alpha-D-ribose 1-diphosphate: step 2/9. The protein operates within amino-acid biosynthesis; L-histidine biosynthesis; L-histidine from 5-phospho-alpha-D-ribose 1-diphosphate: step 3/9. In Oceanobacillus iheyensis (strain DSM 14371 / CIP 107618 / JCM 11309 / KCTC 3954 / HTE831), this protein is Histidine biosynthesis bifunctional protein HisIE.